Reading from the N-terminus, the 547-residue chain is Mitogen-activated protein kinase 15 (547 aa).

Residues 1–20 (MCAAEVDRHVSQRYLIKRRL) are ubiquitin-conjugating. Residues 14 to 305 (YLIKRRLGKG…AEQALQHPYV (292 aa)) enclose the Protein kinase domain. Residues 20–28 (LGKGAYGIV) and lysine 43 each bind ATP. Catalysis depends on aspartate 138, which acts as the Proton acceptor. Threonine 176 carries the phosphothreonine modification. Positions 176-178 (TEY) match the TXY motif. Residue tyrosine 178 is modified to Phosphotyrosine. A necessary to interact with ESRRA, to regulate its subcellular localization and to inhibit its transcriptional activity region spans residues 266–286 (LDALLPPDTPPEALDLLKRLL). The requires for interaction with GABARAP, MAP1LC3B AND GABARAPL1 stretch occupies residues 301–380 (QHPYVQRFHC…SQRQSLKPGV (80 aa)). The segment at 370 to 503 (ASQRQSLKPG…EAPEPRPGRR (134 aa)) is disordered. 2 PXXXP motif repeats span residues 378–382 (PGVLP) and 385–389 (LAETP). 2 PXXXP motif; regulates binding with chromatin and interaction with PCNA repeats span residues 393–397 (RGPKP) and 401–405 (HGHDP). Over residues 401–414 (HGHDPEHVEVRRQS) the composition is skewed to basic and acidic residues. An Omega-N-methylarginine modification is found at arginine 449. A compositionally biased stretch (polar residues) spans 454–465 (SLTSQAAAQAAN). Residues 481–490 (AVGARRVPSR) show a composition bias toward low complexity. A compositionally biased stretch (basic and acidic residues) spans 491–500 (LPREAPEPRP).

Belongs to the protein kinase superfamily. CMGC Ser/Thr protein kinase family. MAP kinase subfamily. As to quaternary structure, interacts with CSK/c-Src, ABL1, RET and TGFB1I1. Interacts with GABARAP, MAP1LC3B and GABARAPL1; controls, in a kinase-dependent fashion, both basal and starvation-induced autophagy. Interacts with ESRRA; promotes re-localization of ESRRA to the cytoplasm through a XPO1-dependent mechanism then inhibits ESRRA transcriptional activity. Interacts with PCNA; the interaction is chromatin binding- and kinase activity-dependent and prevents MDM2-mediated PCNA destruction by inhibiting the association of PCNA with MDM2. Interacts with DVL2. Interacts with CLIC3; MAPK15 does not phosphorylates CLIC3. Autophosphorylated on Thr-176 and Tyr-178; activates the enzyme. Post-translationally, dephosphorylated by PTPN1. In terms of processing, ubiquitinated. Ubiquitination may allow its tight kinase activity regulation and rapid turnover. May be ubiquitinated by a SCF E3 ligase. In terms of tissue distribution, ubiquitously expressed at a weak level. Highest expression is found in testis and to a lower extent in lung.

It localises to the cytoplasm. The protein localises to the cytoskeleton. It is found in the cilium basal body. Its subcellular location is the cell junction. The protein resides in the tight junction. It localises to the microtubule organizing center. The protein localises to the centrosome. It is found in the centriole. Its subcellular location is the cytoplasmic vesicle. The protein resides in the autophagosome. It localises to the golgi apparatus. The protein localises to the nucleus. It is found in the spindle. The catalysed reaction is L-seryl-[protein] + ATP = O-phospho-L-seryl-[protein] + ADP + H(+). It carries out the reaction L-threonyl-[protein] + ATP = O-phospho-L-threonyl-[protein] + ADP + H(+). Activated by threonine and tyrosine phosphorylation. Inhibited by dual specificity phosphatases, such as DUSP1. Phosphorylation and activation in response to DNA damaging agents, serum stimulation. Constitutively activated when phosphorylated on Tyr-178. Activity depends on the relative rates of MAPK15 autophosphorylation and dephosphorylation by PTPN1. Functionally, atypical MAPK protein that regulates several process such as autophagy, ciliogenesis, protein trafficking/secretion and genome integrity, in a kinase activity-dependent manner. Controls both, basal and starvation-induced autophagy throught its interaction with GABARAP, MAP1LC3B and GABARAPL1 leading to autophagosome formation, SQSTM1 degradation and reduced MAP1LC3B inhibitory phosphorylation. Regulates primary cilium formation and the localization of ciliary proteins involved in cilium structure, transport, and signaling. Prevents the relocation of the sugar-adding enzymes from the Golgi to the endoplasmic reticulum, thereby restricting the production of sugar-coated proteins. Upon amino-acid starvation, mediates transitional endoplasmic reticulum site disassembly and inhibition of secretion. Binds to chromatin leading to MAPK15 activation and interaction with PCNA, that which protects genomic integrity by inhibiting MDM2-mediated degradation of PCNA. Regulates DA transporter (DAT) activity and protein expression via activation of RhoA. In response to H(2)O(2) treatment phosphorylates ELAVL1, thus preventing it from binding to the PDCD4 3'UTR and rendering the PDCD4 mRNA accessible to miR-21 and leading to its degradation and loss of protein expression. Also functions in a kinase activity-independent manner as a negative regulator of growth. Phosphorylates in vitro FOS and MBP. During oocyte maturation, plays a key role in the microtubule organization and mei- otic cell cycle progression in oocytes, fertilized eggs, and early embryos. Interacts with ESRRA promoting its re-localization from the nucleus to the cytoplasm and then prevents its transcriptional activity. This Rattus norvegicus (Rat) protein is Mitogen-activated protein kinase 15 (Mapk15).